The chain runs to 300 residues: NAD kinase (300 aa).

Catalysis depends on aspartate 75, which acts as the Proton acceptor. NAD(+)-binding positions include 75 to 76, 149 to 150, arginine 177, aspartate 179, 190 to 195, alanine 214, and glutamine 248; these read DG, ND, and TAYALS.

It belongs to the NAD kinase family. A divalent metal cation is required as a cofactor.

The protein resides in the cytoplasm. The catalysed reaction is NAD(+) + ATP = ADP + NADP(+) + H(+). Involved in the regulation of the intracellular balance of NAD and NADP, and is a key enzyme in the biosynthesis of NADP. Catalyzes specifically the phosphorylation on 2'-hydroxyl of the adenosine moiety of NAD to yield NADP. The chain is NAD kinase from Paraburkholderia phymatum (strain DSM 17167 / CIP 108236 / LMG 21445 / STM815) (Burkholderia phymatum).